The primary structure comprises 339 residues: Glyceraldehyde-3-phosphate dehydrogenase (339 aa).

NAD(+) is bound by residues arginine 12–isoleucine 13, aspartate 34, arginine 78, and threonine 120. Residues serine 149–threonine 151, threonine 180, threonine 209–glycine 210, and arginine 232 each bind D-glyceraldehyde 3-phosphate. The active-site Nucleophile is the cysteine 150. Asparagine 319 serves as a coordination point for NAD(+).

This sequence belongs to the glyceraldehyde-3-phosphate dehydrogenase family. In terms of assembly, homotetramer.

The protein resides in the cytoplasm. The enzyme catalyses D-glyceraldehyde 3-phosphate + phosphate + NAD(+) = (2R)-3-phospho-glyceroyl phosphate + NADH + H(+). It participates in carbohydrate degradation; glycolysis; pyruvate from D-glyceraldehyde 3-phosphate: step 1/5. Functionally, catalyzes the oxidative phosphorylation of glyceraldehyde 3-phosphate (G3P) to 1,3-bisphosphoglycerate (BPG) using the cofactor NAD. The first reaction step involves the formation of a hemiacetal intermediate between G3P and a cysteine residue, and this hemiacetal intermediate is then oxidized to a thioester, with concomitant reduction of NAD to NADH. The reduced NADH is then exchanged with the second NAD, and the thioester is attacked by a nucleophilic inorganic phosphate to produce BPG. The sequence is that of Glyceraldehyde-3-phosphate dehydrogenase (gapA) from Haemophilus influenzae (strain ATCC 51907 / DSM 11121 / KW20 / Rd).